A 99-amino-acid chain; its full sequence is Large ribosomal subunit protein uL23 (99 aa).

It belongs to the universal ribosomal protein uL23 family. Part of the 50S ribosomal subunit. Contacts protein L29, and trigger factor when it is bound to the ribosome.

Its function is as follows. One of the early assembly proteins it binds 23S rRNA. One of the proteins that surrounds the polypeptide exit tunnel on the outside of the ribosome. Forms the main docking site for trigger factor binding to the ribosome. The polypeptide is Large ribosomal subunit protein uL23 (Rhodopseudomonas palustris (strain BisB18)).